Here is a 103-residue protein sequence, read N- to C-terminus: Large ribosomal subunit protein bL21 (103 aa).

Belongs to the bacterial ribosomal protein bL21 family. As to quaternary structure, part of the 50S ribosomal subunit. Contacts protein L20.

In terms of biological role, this protein binds to 23S rRNA in the presence of protein L20. This Shewanella putrefaciens (strain CN-32 / ATCC BAA-453) protein is Large ribosomal subunit protein bL21.